A 174-amino-acid polypeptide reads, in one-letter code: Large ribosomal subunit protein uL10 (174 aa).

This sequence belongs to the universal ribosomal protein uL10 family. In terms of assembly, part of the ribosomal stalk of the 50S ribosomal subunit. The N-terminus interacts with L11 and the large rRNA to form the base of the stalk. The C-terminus forms an elongated spine to which L12 dimers bind in a sequential fashion forming a multimeric L10(L12)X complex.

Forms part of the ribosomal stalk, playing a central role in the interaction of the ribosome with GTP-bound translation factors. The polypeptide is Large ribosomal subunit protein uL10 (Anaeromyxobacter dehalogenans (strain 2CP-C)).